Here is a 387-residue protein sequence, read N- to C-terminus: 3-ketoacyl-CoA thiolase (387 aa).

Cys91 serves as the catalytic Acyl-thioester intermediate. Active-site proton acceptor residues include His343 and Cys373.

It belongs to the thiolase-like superfamily. Thiolase family. In terms of assembly, heterotetramer of two alpha chains (FadB) and two beta chains (FadA).

It is found in the cytoplasm. The catalysed reaction is an acyl-CoA + acetyl-CoA = a 3-oxoacyl-CoA + CoA. It functions in the pathway lipid metabolism; fatty acid beta-oxidation. Functionally, catalyzes the final step of fatty acid oxidation in which acetyl-CoA is released and the CoA ester of a fatty acid two carbons shorter is formed. This Escherichia coli O139:H28 (strain E24377A / ETEC) protein is 3-ketoacyl-CoA thiolase.